A 347-amino-acid chain; its full sequence is Phosphoribosylformylglycinamidine cyclo-ligase (347 aa).

Belongs to the AIR synthase family.

It is found in the cytoplasm. It catalyses the reaction 2-formamido-N(1)-(5-O-phospho-beta-D-ribosyl)acetamidine + ATP = 5-amino-1-(5-phospho-beta-D-ribosyl)imidazole + ADP + phosphate + H(+). It functions in the pathway purine metabolism; IMP biosynthesis via de novo pathway; 5-amino-1-(5-phospho-D-ribosyl)imidazole from N(2)-formyl-N(1)-(5-phospho-D-ribosyl)glycinamide: step 2/2. The protein is Phosphoribosylformylglycinamidine cyclo-ligase of Dechloromonas aromatica (strain RCB).